The following is a 441-amino-acid chain: Tubulin beta-1 chain (441 aa).

The GTP site is built by Gln11, Glu69, Ser138, Gly142, Thr143, Gly144, Asn204, and Asn226. Glu69 lines the Mg(2+) pocket.

The protein belongs to the tubulin family. In terms of assembly, dimer of alpha and beta chains. A typical microtubule is a hollow water-filled tube with an outer diameter of 25 nm and an inner diameter of 15 nM. Alpha-beta heterodimers associate head-to-tail to form protofilaments running lengthwise along the microtubule wall with the beta-tubulin subunit facing the microtubule plus end conferring a structural polarity. Microtubules usually have 13 protofilaments but different protofilament numbers can be found in some organisms and specialized cells. Requires Mg(2+) as cofactor. Expressed primarily in touch receptor neurons.

The protein localises to the cytoplasm. It is found in the cytoskeleton. Functionally, TTubulin is the major constituent of microtubules, a cylinder consisting of laterally associated linear protofilaments composed of alpha- and beta-tubulin heterodimers. Microtubules grow by the addition of GTP-tubulin dimers to the microtubule end, where a stabilizing cap forms. Below the cap, tubulin dimers are in GDP-bound state, owing to GTPase activity of alpha-tubulin. Plays a role in mechanosensory transduction (touch sensitivity). Its function is as follows. Mec-7 beta-tubulin is required for the production of 15-protofilament microtubules. The protein is Tubulin beta-1 chain (mec-7) of Caenorhabditis elegans.